The chain runs to 239 residues: MGHKVHPIGIRLGISADWNSKWYANKAEFAGYLAADLKVRQVLRKKMSQAGISKILIERPSNTACVSMHVARPGVVIGKRGEDIEMLRKQVSDIMGVSVHINVIEVRKPELDAQLVAESVAQQLERRIMFRRAMKRSVGNAMRLGALGIKISVAGRLNGAEIARSEWYREGRVPLQTLRADIGYGFSEAHTNYGVTGVKVLIYHGDIFSFSSVGQEKQDDISRGDRNADRSSRRSREVR.

The region spanning 39 to 107 (VRQVLRKKMS…SVHINVIEVR (69 aa)) is the KH type-2 domain. Positions 217–239 (KQDDISRGDRNADRSSRRSREVR) are disordered.

The protein belongs to the universal ribosomal protein uS3 family. Part of the 30S ribosomal subunit. Forms a tight complex with proteins S10 and S14.

Binds the lower part of the 30S subunit head. Binds mRNA in the 70S ribosome, positioning it for translation. The chain is Small ribosomal subunit protein uS3 from Xylella fastidiosa (strain 9a5c).